A 405-amino-acid polypeptide reads, in one-letter code: L-carnitine CoA-transferase (405 aa).

2 residues coordinate CoA: Lys97 and Arg104. Asp169 acts as the Nucleophile in catalysis.

Belongs to the CoA-transferase III family. CaiB subfamily. As to quaternary structure, homodimer.

It is found in the cytoplasm. It catalyses the reaction crotonobetainyl-CoA + (R)-carnitine = crotonobetaine + (R)-carnitinyl-CoA. It carries out the reaction 4-(trimethylamino)butanoyl-CoA + (R)-carnitine = (R)-carnitinyl-CoA + 4-(trimethylamino)butanoate. Its pathway is amine and polyamine metabolism; carnitine metabolism. Functionally, catalyzes the reversible transfer of the CoA moiety from gamma-butyrobetainyl-CoA to L-carnitine to generate L-carnitinyl-CoA and gamma-butyrobetaine. Is also able to catalyze the reversible transfer of the CoA moiety from gamma-butyrobetainyl-CoA or L-carnitinyl-CoA to crotonobetaine to generate crotonobetainyl-CoA. The polypeptide is L-carnitine CoA-transferase (Salmonella gallinarum (strain 287/91 / NCTC 13346)).